A 265-amino-acid chain; its full sequence is Tryptophan synthase alpha chain (265 aa).

Catalysis depends on proton acceptor residues E45 and D56.

Belongs to the TrpA family. As to quaternary structure, tetramer of two alpha and two beta chains.

It carries out the reaction (1S,2R)-1-C-(indol-3-yl)glycerol 3-phosphate + L-serine = D-glyceraldehyde 3-phosphate + L-tryptophan + H2O. It functions in the pathway amino-acid biosynthesis; L-tryptophan biosynthesis; L-tryptophan from chorismate: step 5/5. The alpha subunit is responsible for the aldol cleavage of indoleglycerol phosphate to indole and glyceraldehyde 3-phosphate. The chain is Tryptophan synthase alpha chain from Halalkalibacterium halodurans (strain ATCC BAA-125 / DSM 18197 / FERM 7344 / JCM 9153 / C-125) (Bacillus halodurans).